Reading from the N-terminus, the 140-residue chain is Biopolymer transport protein exbD1 (140 aa).

The Cytoplasmic segment spans residues M1–N16. The chain crosses the membrane as a helical span at residues V17–L37. Over M38–Q140 the chain is Periplasmic.

It belongs to the ExbD/TolR family. In terms of assembly, the accessory proteins ExbB and ExbD seem to form a complex with TonB.

Its subcellular location is the cell inner membrane. Its function is as follows. Involved in the TonB-dependent energy-dependent transport of various receptor-bound substrates. The chain is Biopolymer transport protein exbD1 (exbD1) from Xanthomonas campestris pv. campestris (strain B100).